Consider the following 143-residue polypeptide: Histone H2B.2, sperm (143 aa).

Residues 1–52 (MPRSPSKSSPRKGSPRKGSPRKGSPKRGGKGAKRAGKGGRRRNVVKRRRRRR) form a disordered region. Short sequence motifs (SPKK motif) lie at residues 4-7 (SPSK), 9-12 (SPRK), 14-17 (SPRK), 19-22 (SPRK), and 24-27 (SPKR). Residues 9–52 (SPRKGSPRKGSPRKGSPKRGGKGAKRAGKGGRRRNVVKRRRRRR) are compositionally biased toward basic residues. Phosphoserine is present on residues serine 14, serine 19, and serine 24. O-linked (GlcNAc) serine glycosylation is present at serine 130. Lysine 138 participates in a covalent cross-link: Glycyl lysine isopeptide (Lys-Gly) (interchain with G-Cter in ubiquitin).

It belongs to the histone H2B family. In terms of assembly, the nucleosome is a histone octamer containing two molecules each of H2A, H2B, H3 and H4 assembled in one H3-H4 heterotetramer and two H2A-H2B heterodimers. The octamer wraps approximately 147 bp of DNA. Monoubiquitination of Lys-138 gives a specific tag for epigenetic transcriptional activation and is also prerequisite for histone H3 'Lys-4' and 'Lys-79' methylation. In terms of processing, phosphorylated on SPKK motifs 3, 4 and 5; which may regulate DNA binding. Dephosphorylated during maturation of spermatids to mature sperm and rephosphorylated at fertilization. Post-translationally, glcNAcylation at Ser-130 promotes monoubiquitination of Lys-138. It fluctuates in response to extracellular glucose, and associates with transcribed genes. In terms of tissue distribution, testis-specific.

Its subcellular location is the nucleus. The protein localises to the chromosome. Its function is as follows. Core component of nucleosome. Nucleosomes wrap and compact DNA into chromatin, limiting DNA accessibility to the cellular machineries which require DNA as a template. Histones thereby play a central role in transcription regulation, DNA repair, DNA replication and chromosomal stability. DNA accessibility is regulated via a complex set of post-translational modifications of histones, also called histone code, and nucleosome remodeling. The chain is Histone H2B.2, sperm from Lytechinus pictus (Painted sea urchin).